The primary structure comprises 74 residues: Exodeoxyribonuclease 7 small subunit (74 aa).

It belongs to the XseB family. Heterooligomer composed of large and small subunits.

The protein resides in the cytoplasm. It carries out the reaction Exonucleolytic cleavage in either 5'- to 3'- or 3'- to 5'-direction to yield nucleoside 5'-phosphates.. Bidirectionally degrades single-stranded DNA into large acid-insoluble oligonucleotides, which are then degraded further into small acid-soluble oligonucleotides. This Neisseria gonorrhoeae (strain ATCC 700825 / FA 1090) protein is Exodeoxyribonuclease 7 small subunit.